Here is a 251-residue protein sequence, read N- to C-terminus: Coproheme decarboxylase (251 aa).

Residues arginine 133, 147–151 (YPMSK), histidine 174, glutamine 187, and serine 225 contribute to the Fe-coproporphyrin III site. Tyrosine 147 is an active-site residue.

This sequence belongs to the ChdC family. Type 1 subfamily. The cofactor is Fe-coproporphyrin III.

The catalysed reaction is Fe-coproporphyrin III + 2 H2O2 + 2 H(+) = heme b + 2 CO2 + 4 H2O. It carries out the reaction Fe-coproporphyrin III + H2O2 + H(+) = harderoheme III + CO2 + 2 H2O. It catalyses the reaction harderoheme III + H2O2 + H(+) = heme b + CO2 + 2 H2O. The protein operates within porphyrin-containing compound metabolism; protoheme biosynthesis. Its function is as follows. Involved in coproporphyrin-dependent heme b biosynthesis. Catalyzes the decarboxylation of Fe-coproporphyrin III (coproheme) to heme b (protoheme IX), the last step of the pathway. The reaction occurs in a stepwise manner with a three-propionate intermediate. The chain is Coproheme decarboxylase from Listeria monocytogenes serotype 4b (strain CLIP80459).